The primary structure comprises 162 residues: NADH-quinone oxidoreductase subunit I (162 aa).

2 consecutive 4Fe-4S ferredoxin-type domains span residues 54 to 83 (RRYE…IESE) and 93 to 122 (TRYD…ETHI). Residues cysteine 63, cysteine 66, cysteine 69, cysteine 73, cysteine 102, cysteine 105, cysteine 108, and cysteine 112 each coordinate [4Fe-4S] cluster.

This sequence belongs to the complex I 23 kDa subunit family. As to quaternary structure, NDH-1 is composed of 14 different subunits. Subunits NuoA, H, J, K, L, M, N constitute the membrane sector of the complex. The cofactor is [4Fe-4S] cluster.

The protein localises to the cell inner membrane. The catalysed reaction is a quinone + NADH + 5 H(+)(in) = a quinol + NAD(+) + 4 H(+)(out). Functionally, NDH-1 shuttles electrons from NADH, via FMN and iron-sulfur (Fe-S) centers, to quinones in the respiratory chain. The immediate electron acceptor for the enzyme in this species is believed to be ubiquinone. Couples the redox reaction to proton translocation (for every two electrons transferred, four hydrogen ions are translocated across the cytoplasmic membrane), and thus conserves the redox energy in a proton gradient. The chain is NADH-quinone oxidoreductase subunit I from Paraburkholderia xenovorans (strain LB400).